The primary structure comprises 465 residues: Argininosuccinate lyase (465 aa).

It belongs to the lyase 1 family. Argininosuccinate lyase subfamily.

It is found in the cytoplasm. The catalysed reaction is 2-(N(omega)-L-arginino)succinate = fumarate + L-arginine. Its pathway is amino-acid biosynthesis; L-arginine biosynthesis; L-arginine from L-ornithine and carbamoyl phosphate: step 3/3. In Methanosphaera stadtmanae (strain ATCC 43021 / DSM 3091 / JCM 11832 / MCB-3), this protein is Argininosuccinate lyase.